Reading from the N-terminus, the 2334-residue chain is Genome polyprotein (2334 aa).

The SF3 helicase domain occupies 487–647; it reads QKVVADIHTL…EGWQSTRHGS (161 aa). Tyr1007 is modified (O-(5'-phospho-RNA)-tyrosine). Residues 1102–1237 form the Peptidase C24 domain; that stretch reads GLPGYLRFNG…SKMCTLIDCT (136 aa). Active-site for 3CLpro activity residues include His1128, Asp1145, and Cys1205. The region spanning 1488–1612 is the RdRp catalytic domain; the sequence is GDFLCLDYSK…AMTPMMVSLL (125 aa). Cys1577 and Cys1584 form a disulfide bridge. The interval 1760 to 1784 is disordered; the sequence is EGKPRADAPGTATTASVPGTTTDGM. Over residues 1767-1781 the composition is skewed to low complexity; that stretch reads APGTATTASVPGTTT.

Requires Mn(2+) as cofactor. Specific enzymatic cleavages by its own cysteine protease yield mature proteins. The protease cleaves itself from the nascent polyprotein autocatalytically. Precursor p41 can be cleaved by viral 3CLpro into protein p19 and VPg, or cleaved by host protease into protein p23/2 and protein p18. Post-translationally, VPg is uridylylated by the polymerase and is covalently attached to the 5'-end of the polyadenylated genomic and subgenomic RNAs. This uridylylated form acts as a nucleotide-peptide primer for the polymerase.

It localises to the virion. Its subcellular location is the host cytoplasm. The enzyme catalyses a ribonucleoside 5'-triphosphate + H2O = a ribonucleoside 5'-diphosphate + phosphate + H(+). The catalysed reaction is Endopeptidase with a preference for cleavage when the P1 position is occupied by Glu-|-Xaa and the P1' position is occupied by Gly-|-Yaa.. It carries out the reaction RNA(n) + a ribonucleoside 5'-triphosphate = RNA(n+1) + diphosphate. Functionally, together with NTPase and NS4, initiates the formation of the replication complex. Induces the proliferation of the host smooth ER membranes forming long tubular structures. These remodeled membranes probably form the viral factories that contain the replication complex. Displays NTPase activity, but no helicase activity. Induces the formation of convoluted membranes derived from the host ER. These remodeled membranes probably form the viral factories that contain the replication complex. Together with NS2 and NS4, initiates the formation of the replication complex. Its function is as follows. Probable key protein responsible for the formation of membrane alterations by the virus. Induces the formation of convoluted membranes derived from the host ER. These remodeled membranes probably form the viral factories that contain the replication complex. Together with NS2 and NTPase, initiates the formation of the replication complex. In terms of biological role, viral genome-linked protein is covalently linked to the 5'-end of the positive-strand, negative-strand genomic RNAs and subgenomic RNA. Acts as a genome-linked replication primer. May recruit ribosome to viral RNA thereby promoting viral proteins translation. Interacts with host translation initiation complex to allow the translation of viral proteins. Functionally, processes the polyprotein. 3CLpro-RdRp is first released by autocleavage, then all other proteins are cleaved. May cleave polyadenylate-binding protein thereby inhibiting cellular translation. Replicates genomic and antigenomic RNA by recognizing replications specific signals. Also transcribes a subgenomic mRNA by initiating RNA synthesis internally on antigenomic RNA. This sgRNA codes for structural proteins. Catalyzes the covalent attachment VPg with viral RNAs. Its function is as follows. Capsid protein VP60 self assembles to form an icosahedral capsid with a T=3 symmetry, about 35 nm in diameter, and consisting of 180 capsid proteins. A smaller form of capsid with a diameter of 23 nm might be capsid proteins assembled as icosahedron with T=1 symmetry. The capsid encapsulate VP2 proteins and genomic or subgenomic RNA. Attaches virion to target cells by binding histo-blood group antigens, inducing endocytosis of the viral particle. Acidification of the endosome induces conformational change of capsid protein thereby injecting virus genomic RNA into host cytoplasm. The chain is Genome polyprotein from Lepus europaeus (European hare).